The following is a 480-amino-acid chain: Probable G-protein coupled receptor Mth-like 6 (480 aa).

The first 20 residues, 1–20, serve as a signal peptide directing secretion; sequence MLLNILAIILVFVISSQSEA. The Extracellular segment spans residues 21–202; the sequence is VIPGCDYFDT…LEHVYIPKSM (182 aa). 4 disulfide bridges follow: Cys-25/Cys-78, Cys-80/Cys-85, Cys-89/Cys-179, and Cys-90/Cys-101. Asn-40 carries N-linked (GlcNAc...) asparagine glycosylation. Asn-160 and Asn-170 each carry an N-linked (GlcNAc...) asparagine glycan. Residues 203-225 form a helical membrane-spanning segment; that stretch reads PAVPQVGTISMVGCILTIAVYLY. Over 226-231 the chain is Cytoplasmic; it reads IKKLRN. The helical transmembrane segment at 232–254 threads the bilayer; the sequence is LLGKCFICYVFCKFVQYLIWAGG. At 255 to 263 the chain is on the extracellular side; the sequence is DLNLWNNIC. A helical membrane pass occupies residues 264-283; sequence SLAGYTNYFFALASHFWLSV. Residues 284–303 lie on the Cytoplasmic side of the membrane; that stretch reads MSHQIWKNLRLINRDERSYH. Residues 304-326 traverse the membrane as a helical segment; it reads FLIYNIYGWGTPAIMTAITYLVD. The Extracellular segment spans residues 327–356; the sequence is WAWEDRPDKLNWIPGVGLYRCWINTYDWSA. The helical transmembrane segment at 357-379 threads the bilayer; the sequence is MIYLYGPMLILSLFNVVTFILTV. Residues 380 to 405 lie on the Cytoplasmic side of the membrane; sequence NHIMKIKSSVKSSTQQQRKCIQNNDF. A helical transmembrane segment spans residues 406–428; the sequence is LLYLRLSVMMGVTGISEVITYFV. At 429 to 437 the chain is on the extracellular side; the sequence is KRHKFWRQV. A helical transmembrane segment spans residues 438 to 457; it reads LRVPNFFHLGSGIVVFVLFI. Over 458–480 the chain is Cytoplasmic; it reads LKRSTFQMIMERISGPRRQQPAS.

Belongs to the G-protein coupled receptor 2 family. Mth subfamily.

The protein localises to the cell membrane. The protein is Probable G-protein coupled receptor Mth-like 6 (mthl6) of Drosophila melanogaster (Fruit fly).